Consider the following 351-residue polypeptide: Increased glyphosate resistance protein (351 aa).

The span at Met1–Ser18 shows a compositional bias: basic and acidic residues. A disordered region spans residues Met1–Pro29.

In terms of biological role, confers an increase in glyphosate resistance when expressed in E.coli. This is Increased glyphosate resistance protein from Pseudomonas sp. (strain PG2982).